Here is a 27-residue protein sequence, read N- to C-terminus: Conotoxin flf14b (27 aa).

2 cysteine pairs are disulfide-bonded: Cys-6–Cys-26 and Cys-10–Cys-22.

In terms of tissue distribution, expressed by the venom duct.

It is found in the secreted. This is Conotoxin flf14b from Conus anabathrum floridanus (Florida cone).